Here is a 378-residue protein sequence, read N- to C-terminus: T-cell immunoglobulin and mucin domain-containing protein 4 (378 aa).

A signal peptide spans 1–24 (MSKEPLILWLMIEFWWLYLTPVTS). The 102-residue stretch at 25-126 (ETVVTEVLGH…PGWFNDVKIN (102 aa)) folds into the Ig-like V-type domain. The Extracellular segment spans residues 25 to 314 (ETVVTEVLGH…SMKNEMPISQ (290 aa)). 3 cysteine pairs are disulfide-bonded: C40/C112, C53/C64, and C59/C111. Disordered stretches follow at residues 136 to 160 (TTTH…TRQM) and 269 to 304 (WKTS…GIPM). Polar residues predominate over residues 269-297 (WKTSDSVSSPQPGASDTAVPEQNKTTKTG). N291 is a glycosylation site (N-linked (GlcNAc...) asparagine). The helical transmembrane segment at 315-335 (LLMIIAPSLGFVLFALFVAFL) threads the bilayer. Residues 336 to 378 (LRGKLMETYCSQKHTRLDYIGDSKNVLNDVQHGREDEDGLFTL) lie on the Cytoplasmic side of the membrane. Phosphoserine is present on S358.

This sequence belongs to the immunoglobulin superfamily. TIM family. In terms of assembly, interacts with MERTK; this interaction enhances TIMD4-mediated efferocytosis. Interacts with EPHA2.

Its subcellular location is the cell membrane. It is found in the secreted. The protein resides in the extracellular exosome. Phosphatidylserine receptor that plays different role in immune response including phagocytosis of apoptotic cells and T-cell regulation. Controls T-cell activation in a bimodal fashion, decreasing the activation of naive T-cells by inducing cell cycle arrest, while increasing proliferation of activated T-cells by activating AKT1 and ERK1/2 phosphorylations and subsequent signaling pathways. Also plays a role in efferocytosis which is the process by which apoptotic cells are removed by phagocytic cells. Mechanistically, promotes the engulfment of apoptotic cells or exogenous particles by securing them to phagocytes through direct binding to phosphatidylserine present on apoptotic cells, while other engulfment receptors such as MERTK efficiently recognize apoptotic cells and mediate their ingestion. Additionally, promotes autophagy process by suppressing NLRP3 inflammasome activity via activation of LKB1/PRKAA1 pathway in a phosphatidylserine-dependent mechanism. Its function is as follows. (Microbial infection) Plays a positive role in exosome-mediated trafficking of HIV-1 virus and its entry into immune cells. In Homo sapiens (Human), this protein is T-cell immunoglobulin and mucin domain-containing protein 4 (TIMD4).